A 345-amino-acid polypeptide reads, in one-letter code: tRNA N6-adenosine threonylcarbamoyltransferase (345 aa).

Residues H111 and H115 each contribute to the Fe cation site. Substrate-binding positions include 134 to 138 (LVSGG), D167, G180, and N276. D304 is a binding site for Fe cation.

The protein belongs to the KAE1 / TsaD family. The cofactor is Fe(2+).

It localises to the cytoplasm. It carries out the reaction L-threonylcarbamoyladenylate + adenosine(37) in tRNA = N(6)-L-threonylcarbamoyladenosine(37) in tRNA + AMP + H(+). Its function is as follows. Required for the formation of a threonylcarbamoyl group on adenosine at position 37 (t(6)A37) in tRNAs that read codons beginning with adenine. Is involved in the transfer of the threonylcarbamoyl moiety of threonylcarbamoyl-AMP (TC-AMP) to the N6 group of A37, together with TsaE and TsaB. TsaD likely plays a direct catalytic role in this reaction. In Bordetella avium (strain 197N), this protein is tRNA N6-adenosine threonylcarbamoyltransferase.